The sequence spans 452 residues: Keratin, type I cytoskeletal 15 (452 aa).

Residues 1–97 are head; it reads MATTFLQTSS…GGDGGLLSGN (97 aa). 5 positions are modified to phosphoserine: serine 15, serine 16, serine 28, serine 33, and serine 47. The coil 1A stretch occupies residues 98–133; it reads EKVTMQNLNDRLASYLDKVRALEQANTELEVKIRDW. One can recognise an IF rod domain in the interval 98-410; sequence EKVTMQNLND…NLLEGQDAKM (313 aa). At threonine 124 the chain carries Phosphothreonine. Residues 134-152 are linker 1; sequence YQKQSPASPDRDYSHYFKT. Positions 153 to 244 are coil 1B; that stretch reads MEEIRDKILA…KNHEEEMKEF (92 aa). A linker 12 region spans residues 245-264; it reads SSQLAGQVNVEMDAAPGVDL. The interval 265 to 406 is coil 2; the sequence is TRMLAEMREQ…ATYRNLLEGQ (142 aa). Lysine 293 is covalently cross-linked (Glycyl lysine isopeptide (Lys-Gly) (interchain with G-Cter in SUMO2)). Phosphothreonine is present on residues threonine 294 and threonine 316. Residues 407-452 are tail; that stretch reads DAKMAGIGVREGSSGGGGSSSSSSNFHISVEESVDGKVVSSRKREI. A disordered region spans residues 413–452; the sequence is IGVREGSSGGGGSSSSSSNFHISVEESVDGKVVSSRKREI. Lysine 443 participates in a covalent cross-link: Glycyl lysine isopeptide (Lys-Gly) (interchain with G-Cter in SUMO1); alternate. Residue lysine 443 forms a Glycyl lysine isopeptide (Lys-Gly) (interchain with G-Cter in SUMO2); alternate linkage.

Belongs to the intermediate filament family. Heterotetramer of two type I and two type II keratins. Forms a heterodimer with KRT14. Interacts with PLEC isoform 1C, when in a heterodimer with KRT14. Interacts with NOD2. In terms of tissue distribution, expressed strongly in the basal cell layer at the tips of rete-like prominences (RLPs) of adult dorsal tongue, outer root sheath (ORS) of hair follicle and skin epidermis (at protein level).

Its function is as follows. In the absence of KRT14, makes a bona fide, but ultrastructurally distinct keratin filament network with KRT5. The protein is Keratin, type I cytoskeletal 15 (Krt15) of Mus musculus (Mouse).